Here is a 637-residue protein sequence, read N- to C-terminus: Biosynthetic arginine decarboxylase (637 aa).

The residue at position 101 (Lys-101) is an N6-(pyridoxal phosphate)lysine. Position 286 to 296 (Val-286 to Tyr-296) interacts with substrate.

This sequence belongs to the Orn/Lys/Arg decarboxylase class-II family. SpeA subfamily. Mg(2+) is required as a cofactor. It depends on pyridoxal 5'-phosphate as a cofactor.

The catalysed reaction is L-arginine + H(+) = agmatine + CO2. It participates in amine and polyamine biosynthesis; agmatine biosynthesis; agmatine from L-arginine: step 1/1. In terms of biological role, catalyzes the biosynthesis of agmatine from arginine. The chain is Biosynthetic arginine decarboxylase from Marinobacter nauticus (strain ATCC 700491 / DSM 11845 / VT8) (Marinobacter aquaeolei).